The primary structure comprises 130 residues: Small ribosomal subunit protein uS9 (130 aa).

It belongs to the universal ribosomal protein uS9 family.

This Photorhabdus laumondii subsp. laumondii (strain DSM 15139 / CIP 105565 / TT01) (Photorhabdus luminescens subsp. laumondii) protein is Small ribosomal subunit protein uS9.